The chain runs to 82 residues: Delta-actitoxin-Aeq2b 2 (82 aa).

The signal sequence occupies residues 1 to 19; that stretch reads MNRLMILVFAAVFLALASA. The propeptide occupies 20–26; the sequence is DEDVDIA. 3 cysteine pairs are disulfide-bonded: C32–C79, C34–C69, and C62–C80.

Belongs to the sea anemone sodium channel inhibitory toxin family. Type I subfamily.

The protein localises to the secreted. It is found in the nematocyst. In terms of biological role, binds specifically to voltage-gated sodium channels (Nav), thereby delaying their inactivation during signal transduction. Causes death to crabs. The chain is Delta-actitoxin-Aeq2b 2 from Actinia equina (Beadlet anemone).